We begin with the raw amino-acid sequence, 324 residues long: MYG1 protein C694.04c (324 aa).

Belongs to the MYG1 family.

The sequence is that of MYG1 protein C694.04c from Schizosaccharomyces pombe (strain 972 / ATCC 24843) (Fission yeast).